Reading from the N-terminus, the 351-residue chain is Large ribosomal subunit protein uL3 (351 aa).

2 disordered regions span residues 1-31 and 246-271; these read MGHRKLASPRRGSAGLRPRKRSSELLPTPRT and KGSRKIGTRGPSLGTPSYTPQPGQLG.

Belongs to the universal ribosomal protein uL3 family. Part of the 50S ribosomal subunit. Forms a cluster with proteins L14 and L24e.

Functionally, one of the primary rRNA binding proteins, it binds directly near the 3'-end of the 23S rRNA, where it nucleates assembly of the 50S subunit. This is Large ribosomal subunit protein uL3 from Saccharolobus islandicus (strain M.14.25 / Kamchatka #1) (Sulfolobus islandicus).